Here is a 248-residue protein sequence, read N- to C-terminus: Aspartate/glutamate leucyltransferase (248 aa).

The protein belongs to the R-transferase family. Bpt subfamily.

The protein resides in the cytoplasm. It carries out the reaction N-terminal L-glutamyl-[protein] + L-leucyl-tRNA(Leu) = N-terminal L-leucyl-L-glutamyl-[protein] + tRNA(Leu) + H(+). The catalysed reaction is N-terminal L-aspartyl-[protein] + L-leucyl-tRNA(Leu) = N-terminal L-leucyl-L-aspartyl-[protein] + tRNA(Leu) + H(+). Its function is as follows. Functions in the N-end rule pathway of protein degradation where it conjugates Leu from its aminoacyl-tRNA to the N-termini of proteins containing an N-terminal aspartate or glutamate. The polypeptide is Aspartate/glutamate leucyltransferase (Methylobacillus flagellatus (strain ATCC 51484 / DSM 6875 / VKM B-1610 / KT)).